A 1813-amino-acid polypeptide reads, in one-letter code: Sucrase-isomaltase, intestinal (1813 aa).

At Met1 to Thr12 the chain is on the cytoplasmic side. Ser7 is modified (phosphoserine; by PKA). Residues Leu13–Pro32 traverse the membrane as a helical; Signal-anchor for type II membrane protein segment. The Lumenal portion of the chain corresponds to Thr33 to Thr1813. The 50-residue stretch at Gly46–Asn95 folds into the P-type 1 domain. 3 disulfide bridges follow: Cys48–Cys79, Cys62–Cys78, and Cys73–Cys91. The interval Asn95–Arg991 is isomaltase. Asn127 is a glycosylation site (N-linked (GlcNAc...) asparagine). Substrate-binding residues include Asp250 and Asp374. At Tyr377 the chain carries Sulfotyrosine. Residue Asn388 is glycosylated (N-linked (GlcNAc...) asparagine). The active-site Nucleophile; for isomaltase activity is the Asp491. Cysteines 506 and 531 form a disulfide. Position 574 (Arg574) interacts with substrate. The active-site For isomaltase activity is the Asp590. An intrachain disulfide couples Cys621 to Cys632. Substrate is bound at residue His648. N-linked (GlcNAc...) asparagine glycans are attached at residues Asn669, Asn791, Asn896, and Asn911. The P-type 2 domain maps to Asn917–Lys962. Positions Ile992 to Thr1813 are sucrase. Residues Asn1221 and Asn1289 are each glycosylated (N-linked (GlcNAc...) asparagine). At Tyr1294 the chain carries Sulfotyrosine. 2 N-linked (GlcNAc...) asparagine glycosylation sites follow: Asn1326 and Asn1340. Sulfotyrosine occurs at positions 1368 and 1371. Asp1380 (nucleophile; for sucrase activity) is an active-site residue. Glu1383 functions as the For sucrase activity in the catalytic mechanism. N-linked (GlcNAc...) asparagine glycosylation is present at Asn1432. Catalysis depends on Asp1486, which acts as the Proton donor; for sucrase activity. N-linked (GlcNAc...) asparagine glycosylation is found at Asn1521, Asn1545, Asn1558, Asn1703, and Asn1772.

This sequence belongs to the glycosyl hydrolase 31 family. The resulting sucrase and isomaltase subunits stay associated with one another in a complex by non-covalent linkages. In terms of processing, the precursor is proteolytically cleaved when exposed to pancreatic proteases in the intestinal lumen. Post-translationally, sulfated.

The protein resides in the apical cell membrane. The catalysed reaction is Hydrolysis of sucrose and maltose by an alpha-D-glucosidase-type action.. It carries out the reaction Hydrolysis of (1-&gt;6)-alpha-D-glucosidic linkages in some oligosaccharides produced from starch and glycogen by alpha-amylase, and in isomaltose.. Its function is as follows. Plays an important role in the final stage of carbohydrate digestion. Isomaltase activity is specific for both alpha-1,4- and alpha-1,6-oligosaccharides. This Suncus murinus (Asian house shrew) protein is Sucrase-isomaltase, intestinal (SI).